A 341-amino-acid chain; its full sequence is DNA fragmentation factor subunit beta (341 aa).

Residues 7–83 (KPKTFKLRSL…LLTAGQTWQG (77 aa)) enclose the CIDE-N domain.

As to quaternary structure, heterodimer of DFFA and DFFB. Interacts with H1-1.

The protein localises to the cytoplasm. The protein resides in the nucleus. Inhibited by DFFA (DFF45). Interacts with HIST1H1A. Nuclease that induces DNA fragmentation and chromatin condensation during apoptosis. Degrades naked DNA and induces apoptotic morphology. The chain is DNA fragmentation factor subunit beta (DFFB) from Bos taurus (Bovine).